The primary structure comprises 783 residues: Polyribonucleotide nucleotidyltransferase 1, mitochondrial (783 aa).

A mitochondrion-targeting transit peptide spans 1–45; that stretch reads MAACRYCCSCLRLRPLSDGPFLLPRRDRALTQLQVRALWSSAGSR. Lysine 250, lysine 264, lysine 285, and lysine 289 each carry N6-acetyllysine. Residue lysine 552 is modified to N6-succinyllysine. One can recognise a KH domain in the interval 605–664; the sequence is PVVETVQVPLSKRAKFVGPGGYNLKKLQAETGVTISQVDEETFSVFAPTPSAMHEARDFI. Residues 679–750 enclose the S1 motif domain; the sequence is GAVYTATITE…ADGRMRLSRK (72 aa). A phosphoserine mark is found at serine 754 and serine 782.

Belongs to the polyribonucleotide nucleotidyltransferase family. Homotrimer; in free form. Homooligomer. Component of the mitochondrial degradosome (mtEXO) complex which is a heteropentamer containing 2 copies of SUPV3L1 and 3 copies of PNPT1. As part of the mitochondrial degradosome complex, interacts with GRSF1 in an RNA-dependent manner; the interaction enhances the activity of the complex. Interacts with TCL1A; the interaction has no effect on PNPT1 exonuclease activity.

It localises to the cytoplasm. The protein localises to the mitochondrion matrix. It is found in the mitochondrion intermembrane space. It catalyses the reaction RNA(n+1) + phosphate = RNA(n) + a ribonucleoside 5'-diphosphate. In terms of biological role, RNA-binding protein implicated in numerous RNA metabolic processes. Catalyzes the phosphorolysis of single-stranded polyribonucleotides processively in the 3'-to-5' direction. Mitochondrial intermembrane factor with RNA-processing exoribonulease activity. Component of the mitochondrial degradosome (mtEXO) complex, that degrades 3' overhang double-stranded RNA with a 3'-to-5' directionality in an ATP-dependent manner. Involved in the degradation of non-coding mitochondrial transcripts (MT-ncRNA) and tRNA-like molecules. Required for correct processing and polyadenylation of mitochondrial mRNAs. Plays a role as a cytoplasmic RNA import factor that mediates the translocation of small RNA components, like the 5S RNA, the RNA subunit of ribonuclease P and the mitochondrial RNA-processing (MRP) RNA, into the mitochondrial matrix. Plays a role in mitochondrial morphogenesis and respiration; regulates the expression of the electron transport chain (ETC) components at the mRNA and protein levels. In the cytoplasm, shows a 3'-to-5' exoribonuclease mediating mRNA degradation activity; degrades c-myc mRNA upon treatment with IFNB1/IFN-beta, resulting in a growth arrest in melanoma cells. Regulates the stability of specific mature miRNAs in melanoma cells; specifically and selectively degrades miR-221, preferentially. Also plays a role in RNA cell surveillance by cleaning up oxidized RNAs. Binds to the RNA subunit of ribonuclease P, MRP RNA and miR-221 microRNA. This is Polyribonucleotide nucleotidyltransferase 1, mitochondrial from Homo sapiens (Human).